A 141-amino-acid polypeptide reads, in one-letter code: Anthrone oxygenase ptaC (141 aa).

Residues 1 to 19 form the signal peptide; that stretch reads MMGLPLMAVPMLLDTGADP. 2 helical membrane-spanning segments follow: residues 33 to 53 and 64 to 84; these read GVRT…WTII and ILAV…YVLA.

It belongs to the anthrone oxygenase family.

The protein localises to the membrane. It participates in secondary metabolite biosynthesis. Anthrone oxygenase; part of the gene cluster that mediates the biosynthesis of pestheic acid, a diphenyl ether which is a biosynthetic precursor of the unique chloropupukeananes. The biosynthesis initiates from condensation of acetate and malonate units catalyzed by the non-reducing PKS ptaA. As the ptaA protein is TE/CLC domain-deficient, hydrolysis and Claisen cyclization of the polyketide could be catalyzed by ptaB containing a beta-lactamase domain. The ptaB protein might hydrolyze the thioester bond between the ACP of ptaA and the intermediate to release atrochrysone carboxylic acid, which is spontaneously dehydrated to form endocrocin anthrone. Endocrocin anthrone is then converted to endocrocin, catalyzed by the anthrone oxygenase ptaC. Spontaneous decarboxylation of endocrocin occurs to generate emodin. An O-methyltransferase (ptaH or ptaI) could methylate emodin to form physcion. PtaJ could then catalyze the oxidative cleavage of physcion, and rotation of the intermediate could then afford desmethylisosulochrin. PtaF, a putative NADH-dependent oxidoreductase, might also participate in the oxidative cleavage step. Desmethylisosulochrin is then transformed by another O-methyltransferase (ptaH or ptaI) to form isosulochrin. Chlorination of isosulochrin by ptaM in the cyclohexadienone B ring then produces chloroisosulochrin. PtaE is responsible for the oxidative coupling reactions of both benzophenones isosulochrin and chloroisosulochrin to RES-1214-1 and pestheic acid respectively, regardless of chlorination. The protein is Anthrone oxygenase ptaC of Pestalotiopsis fici (strain W106-1 / CGMCC3.15140).